The primary structure comprises 475 residues: Aspartyl/glutamyl-tRNA(Asn/Gln) amidotransferase subunit B (475 aa).

This sequence belongs to the GatB/GatE family. GatB subfamily. As to quaternary structure, heterotrimer of A, B and C subunits.

It carries out the reaction L-glutamyl-tRNA(Gln) + L-glutamine + ATP + H2O = L-glutaminyl-tRNA(Gln) + L-glutamate + ADP + phosphate + H(+). The catalysed reaction is L-aspartyl-tRNA(Asn) + L-glutamine + ATP + H2O = L-asparaginyl-tRNA(Asn) + L-glutamate + ADP + phosphate + 2 H(+). In terms of biological role, allows the formation of correctly charged Asn-tRNA(Asn) or Gln-tRNA(Gln) through the transamidation of misacylated Asp-tRNA(Asn) or Glu-tRNA(Gln) in organisms which lack either or both of asparaginyl-tRNA or glutaminyl-tRNA synthetases. The reaction takes place in the presence of glutamine and ATP through an activated phospho-Asp-tRNA(Asn) or phospho-Glu-tRNA(Gln). The protein is Aspartyl/glutamyl-tRNA(Asn/Gln) amidotransferase subunit B of Pelodictyon phaeoclathratiforme (strain DSM 5477 / BU-1).